Reading from the N-terminus, the 228-residue chain is MKLFVAKLGEIDYQDALTMQEKLLLLRQQNKVEDIMLLLQHPPTLTLGTRENRYNILVPEVELKRQGVNIFKSNRGGDVTYHGPGQIVGYPIVDLNGHGKSIREYVHKIEETFIQLLKEEYDLTASRESKYHGVWLGNEKITAIGCAVKRWVTMHGFAFNVNTNLSHFNLINPCGITDRGVTSLQKIFGQPQDMEKVYKQVITYFSRVFDFEPEIIDDKKLNEIVGRE.

Positions 30-213 (NKVEDIMLLL…YFSRVFDFEP (184 aa)) constitute a BPL/LPL catalytic domain. Residues 75-82 (RGGDVTYH), 143-145 (AIG), and 156-158 (GFA) contribute to the substrate site. Cys174 serves as the catalytic Acyl-thioester intermediate.

Belongs to the LipB family.

Its subcellular location is the cytoplasm. It carries out the reaction octanoyl-[ACP] + L-lysyl-[protein] = N(6)-octanoyl-L-lysyl-[protein] + holo-[ACP] + H(+). Its pathway is protein modification; protein lipoylation via endogenous pathway; protein N(6)-(lipoyl)lysine from octanoyl-[acyl-carrier-protein]: step 1/2. Its function is as follows. Catalyzes the transfer of endogenously produced octanoic acid from octanoyl-acyl-carrier-protein onto the lipoyl domains of lipoate-dependent enzymes. Lipoyl-ACP can also act as a substrate although octanoyl-ACP is likely to be the physiological substrate. This Desulforamulus reducens (strain ATCC BAA-1160 / DSM 100696 / MI-1) (Desulfotomaculum reducens) protein is Octanoyltransferase.